The sequence spans 784 residues: Serine/threonine-protein kinase DCLK2 (784 aa).

Residues 1–45 (MASTRSIELEHFEERDKRPRPGSRRGAPSSSGGSSSSGPKGNGLI) are disordered. Basic and acidic residues predominate over residues 7-19 (IELEHFEERDKRP). Residues 24–39 (RRGAPSSSGGSSSSGP) show a composition bias toward low complexity. Thr61 carries the phosphothreonine modification. Doublecortin domains follow at residues 72 to 158 (KKAR…VDYT) and 197 to 280 (KLVT…AQDD). Low complexity-rich tracts occupy residues 300–312 (AVKYSGSKSPGPS) and 341–364 (TPSSQLSTPKSTKSSSSSPTSPGS). Residues 300–368 (AVKYSGSKSP…PTSPGSFRGL (69 aa)) form a disordered region. Phosphoserine is present on Ser379. The region spanning 411–668 (YKIGKVIGDG…AGEILSHPWV (258 aa)) is the Protein kinase domain. Residues 417 to 425 (IGDGNFAVV) and Lys440 each bind ATP. Catalysis depends on Asp532, which acts as the Proton acceptor. Residue Ser664 is modified to Phosphoserine. Phosphothreonine is present on Thr683. The tract at residues 724–784 (CQDSSRPGME…RAGTWRRHRD (61 aa)) is disordered. A compositionally biased stretch (low complexity) spans 741–758 (SASAEEPPVSAPAAAPAP).

The protein belongs to the protein kinase superfamily. CAMK Ser/Thr protein kinase family. CaMK subfamily. Binds to and stabilizes microtubules. Interacts with MAPK8IP1/JIP-1, MAPK8IP2/JIP-2, MAPK9/JNK2, PPP1R9B/NEURABIN-2 and actin. In terms of processing, autophosphorylated.

The protein resides in the cytoplasm. Its subcellular location is the cytoskeleton. The catalysed reaction is L-seryl-[protein] + ATP = O-phospho-L-seryl-[protein] + ADP + H(+). It carries out the reaction L-threonyl-[protein] + ATP = O-phospho-L-threonyl-[protein] + ADP + H(+). Its function is as follows. Protein kinase with a significantly reduced Ca(2+)/CAM affinity and dependence compared to other members of the CaMK family. May play a role in the down-regulation of CRE-dependent gene activation probably by phosphorylation of the CREB coactivator CRTC2/TORC2 and the resulting retention of TORC2 in the cytoplasm. This is Serine/threonine-protein kinase DCLK2 (DCLK2) from Ailuropoda melanoleuca (Giant panda).